The following is a 580-amino-acid chain: Glyco-Gag protein (580 aa).

At 1–51 (MSGASSGTAIGAHLFGVSPEYRVLIGDGGAGPSKSLSEVSFSVWYRSRAAR) the chain is on the cytoplasmic side. A helical transmembrane segment spans residues 52-72 (LVILCLVASFLVPCLTFLIAE). Over 73-580 (AVMGQTVTTP…ANSTLLNLED (508 aa)) the chain is Extracellular. N-linked (GlcNAc...) asparagine; by host glycosylation is present at Asn-134. Disordered regions lie at residues 171–282 (VRPF…NRPQ), 491–514 (ETPE…RHKE), and 560–580 (RDCP…NLED). Over residues 174–193 (FLPPPKPPTPLPQPLSPQPS) the composition is skewed to pro residues. A compositionally biased stretch (low complexity) spans 194 to 203 (APLTSSLYPV). Pro residues-rich tracts occupy residues 204 to 220 (VPKP…PDPS) and 230 to 245 (EPPP…PSGP). The span at 491 to 508 (ETPEEREERLWQRQEERD) shows a compositional bias: basic and acidic residues. Positions 571 to 580 (ANSTLLNLED) are enriched in polar residues. N-linked (GlcNAc...) asparagine; by host glycosylation is present at Asn-572.

In terms of processing, glycosylated by host. Post-translationally, cleaved by host near the middle of the molecule, releasing the c-terminal half containing capsid and nucleoprotein domains op GAG.

It is found in the host cell membrane. In terms of biological role, plays a role in viral particle release. Presumably acts by facilitating the fission of the virion bud at the cell surface. The protein is Glyco-Gag protein of Feline leukemia virus.